We begin with the raw amino-acid sequence, 365 residues long: Patr class I histocompatibility antigen, A-126 alpha chain (365 aa).

The N-terminal stretch at 1–24 is a signal peptide; the sequence is MAVMAPRTLVLLLSGALALTQTWA. The alpha-1 stretch occupies residues 25–114; sequence GSHSMRYFST…LRGYYNQSED (90 aa). The Extracellular portion of the chain corresponds to 25-308; sequence GSHSMRYFST…EPSSQPTIPI (284 aa). Residue Asn110 is glycosylated (N-linked (GlcNAc...) asparagine). Residues 115-206 form an alpha-2 region; that stretch reads GSHTIQLMFG…ENGKETLQRT (92 aa). 2 cysteine pairs are disulfide-bonded: Cys125/Cys188 and Cys227/Cys283. The tract at residues 207–298 is alpha-3; the sequence is DPPKTHMTHH…GLPKPLTLRW (92 aa). Residues 209 to 295 enclose the Ig-like C1-type domain; the sequence is PKTHMTHHPI…QHEGLPKPLT (87 aa). The segment at 299–308 is connecting peptide; the sequence is EPSSQPTIPI. A helical transmembrane segment spans residues 309–332; it reads VGIIAGLVLLGAVITGAVVAAVMW. Residues 333 to 365 lie on the Cytoplasmic side of the membrane; that stretch reads RRKSSDRKGGSYSQAASSDSAQGSDVSLTACKV. The disordered stretch occupies residues 338-365; that stretch reads DRKGGSYSQAASSDSAQGSDVSLTACKV. Positions 342–359 are enriched in low complexity; that stretch reads GSYSQAASSDSAQGSDVS. Ser343 is modified (phosphoserine). Residue Tyr344 is modified to Phosphotyrosine. A phosphoserine mark is found at Ser345, Ser349, Ser352, Ser356, and Ser359.

This sequence belongs to the MHC class I family. Heterodimer of an alpha chain and a beta chain (beta-2-microglobulin).

Its subcellular location is the membrane. Functionally, involved in the presentation of foreign antigens to the immune system. This is Patr class I histocompatibility antigen, A-126 alpha chain (Patr-A) from Pan troglodytes (Chimpanzee).